The following is a 314-amino-acid chain: DNA topoisomerase 1 (314 aa).

One can recognise a Topo IB-type catalytic domain in the interval 73–314 (GKMHVQRRNS…TDYITNTQTV (242 aa)). Tyrosine 273 (O-(3'-phospho-DNA)-tyrosine intermediate) is an active-site residue.

The protein belongs to the type IB topoisomerase family.

The enzyme catalyses ATP-independent breakage of single-stranded DNA, followed by passage and rejoining.. In terms of biological role, releases the supercoiling and torsional tension of DNA introduced during the DNA replication and transcription by transiently cleaving and rejoining one strand of the DNA duplex. Introduces a single-strand break via transesterification at a target site in duplex DNA. The scissile phosphodiester is attacked by the catalytic tyrosine of the enzyme, resulting in the formation of a DNA-(3'-phosphotyrosyl)-enzyme intermediate and the expulsion of a 5'-OH DNA strand. The free DNA strand then undergoes passage around the unbroken strand thus removing DNA supercoils. Finally, in the religation step, the DNA 5'-OH attacks the covalent intermediate to expel the active-site tyrosine and restore the DNA phosphodiester backbone. This Oryctolagus cuniculus (Rabbit) protein is DNA topoisomerase 1 (TOP1).